Reading from the N-terminus, the 126-residue chain is Small ribosomal subunit protein uS13 (126 aa).

The interval 92 to 126 (HRRGLPVRGQRTKTNARTRKGPKKTVAGKKKATRK) is disordered.

It belongs to the universal ribosomal protein uS13 family. In terms of assembly, part of the 30S ribosomal subunit. Forms a loose heterodimer with protein S19. Forms two bridges to the 50S subunit in the 70S ribosome.

In terms of biological role, located at the top of the head of the 30S subunit, it contacts several helices of the 16S rRNA. In the 70S ribosome it contacts the 23S rRNA (bridge B1a) and protein L5 of the 50S subunit (bridge B1b), connecting the 2 subunits; these bridges are implicated in subunit movement. Contacts the tRNAs in the A and P-sites. The chain is Small ribosomal subunit protein uS13 from Deinococcus radiodurans (strain ATCC 13939 / DSM 20539 / JCM 16871 / CCUG 27074 / LMG 4051 / NBRC 15346 / NCIMB 9279 / VKM B-1422 / R1).